A 166-amino-acid polypeptide reads, in one-letter code: Large ribosomal subunit protein uL10 (166 aa).

Belongs to the universal ribosomal protein uL10 family. Part of the ribosomal stalk of the 50S ribosomal subunit. The N-terminus interacts with L11 and the large rRNA to form the base of the stalk. The C-terminus forms an elongated spine to which L12 dimers bind in a sequential fashion forming a multimeric L10(L12)X complex.

Forms part of the ribosomal stalk, playing a central role in the interaction of the ribosome with GTP-bound translation factors. This Pseudomonas fluorescens (strain ATCC BAA-477 / NRRL B-23932 / Pf-5) protein is Large ribosomal subunit protein uL10.